The following is a 233-amino-acid chain: Pre-hexon-linking protein VIII (233 aa).

Position 64 is a phosphothreonine; by host (Thr-64). The propeptide occupies 112–163 (SRHVRFRGRSSPYSPGPIKRLIIRGRGIQLNDEVVSSLTGLRPDGVFQLGGA). Ser-180 bears the Phosphoserine; by host mark.

This sequence belongs to the adenoviridae hexon-linking protein family. In terms of assembly, interacts with the peripentonal hexons as well as the hexons in the facets. Part of a complex composed of the core-capsid bridging protein, the endosome lysis protein VI and the hexon-linking protein VIII; these interactions bridge the virus core to the capsid. Post-translationally, cleaved by the viral protease during virion maturation. May cause the middle segment to be shed from the capsid.

It is found in the virion. It localises to the host nucleus. Structural component of the virion that acts as a cement protein on the capsid interior and which glue the peripentonal hexons and group-of-nine hexons together. This Homo sapiens (Human) protein is Pre-hexon-linking protein VIII.